A 1423-amino-acid chain; its full sequence is Protein phosphatase Slingshot homolog 2 (1423 aa).

2 disordered regions span residues 1 to 37 and 51 to 70; these read MALVTVQRSPTPSTTSSPCASEADSGEEECRSQPRSI and LPRGNGSSTPRVSHRRNKHA. A compositionally biased stretch (low complexity) spans 9–18; that stretch reads SPTPSTTSSP. A phosphoserine mark is found at Ser17, Ser25, and Ser36. A DEK-C domain is found at 248-303; sequence ERTERLIKTKLREIMMQKDLENITSKEIRTELEMQMVCNLREFKEFIDNEMIVILG. Residues 307–448 form the Tyrosine-protein phosphatase domain; that stretch reads SPTQIFEHVF…LEEYQGILLA (142 aa). Cys392 acts as the Phosphocysteine intermediate in catalysis. Phosphoserine is present on residues Ser461, Ser487, Ser534, Ser631, and Ser633. 7 disordered regions span residues 698–725, 833–858, 878–950, 967–991, 1021–1042, 1074–1105, and 1207–1226; these read EMAADDQRSSSLSNTPHASEESSVDEDQ, HSSTADLEEEEPVEGEHDWGPGMHSG, RQEQ…HCER, APQDCLGSDSRSKKQEGDLKKQRAV, SLGHTEPGGEATPSKEGEKQGL, PQVLPLPHSSSECDRPADPNPMLSSPQDKGDC, and PEACRIPHSSSSENIRDLSH. Residues 884-904 show a composition bias toward polar residues; it reads HGTASAGPTLSNRKNSKNDSS. Basic and acidic residues-rich tracts occupy residues 910–932, 976–987, and 1033–1042; these read PKWKSDETTPEHSFFLKEAEPSK, SRSKKQEGDLKK, and PSKEGEKQGL. At Ser1217 the chain carries Phosphoserine. Residue Thr1422 is modified to Phosphothreonine.

Belongs to the protein-tyrosine phosphatase family. As to quaternary structure, interacts with filamentous actin. As to expression, expressed in brain, heart, liver, skeletal muscle, testis and thymus. Also expressed at lower levels in kidney, small intestine and spleen. Within testicular seminiferous tubules expressed in germ cells and spermatocytes, where it has a cytoplasmic localization, and round spermatids, where it concentrates in the acrosomal region next to the nucleus.

It localises to the cytoplasm. It is found in the cytoskeleton. The protein resides in the cell junction. The protein localises to the focal adhesion. Its subcellular location is the cytoplasmic vesicle. It localises to the secretory vesicle. It is found in the acrosome. It catalyses the reaction O-phospho-L-tyrosyl-[protein] + H2O = L-tyrosyl-[protein] + phosphate. It carries out the reaction O-phospho-L-seryl-[protein] + H2O = L-seryl-[protein] + phosphate. The catalysed reaction is O-phospho-L-threonyl-[protein] + H2O = L-threonyl-[protein] + phosphate. Protein phosphatase which regulates actin filament dynamics. Dephosphorylates and activates the actin binding/depolymerizing factor cofilin, which subsequently binds to actin filaments and stimulates their disassembly. Inhibitory phosphorylation of cofilin is mediated by LIMK1, which may also be dephosphorylated and inactivated by this protein. Required for spermatogenesis. Involved in acrosome biogenesis, probably by regulating cofilin-mediated actin cytoskeleton remodeling during proacrosomal vesicle fusion and/or Golgi to perinuclear vesicle trafficking. The sequence is that of Protein phosphatase Slingshot homolog 2 (Ssh2) from Mus musculus (Mouse).